Consider the following 273-residue polypeptide: MHDANIRVAIAGAGGRMGRQLIQAALALEGVQLGAALEREGSSLLGSDAGELAGAGKTGVTVQSSLDAIKDDFDVFIDFTRPEGTLNHLAFCRQHGKGMVIGTTGFDEAGKQAIRDAAADIAIVFAANFSVGVNVMLKLLEKAAKVMGDYTDIEIIEAHHRHKVDAPSGTALAMGEAIAHALDKDLKDCAVYSREGHTGERVPGTIGFATVRAGDIVGEHTAMFADIGERLEITHKASSRMTFANGAVRSALWLSGKESGIFDMRDVLDLNNL.

NAD(+) is bound by residues 12-17 and Glu-38; that span reads GAGGRM. Arg-39 contributes to the NADP(+) binding site. NAD(+) is bound by residues 102 to 104 and 126 to 129; these read GTT and AANF. Residue His-159 is the Proton donor/acceptor of the active site. A (S)-2,3,4,5-tetrahydrodipicolinate-binding site is contributed by His-160. Residue Lys-163 is the Proton donor of the active site. 169–170 contributes to the (S)-2,3,4,5-tetrahydrodipicolinate binding site; it reads GT.

It belongs to the DapB family. As to quaternary structure, homotetramer.

Its subcellular location is the cytoplasm. The enzyme catalyses (S)-2,3,4,5-tetrahydrodipicolinate + NAD(+) + H2O = (2S,4S)-4-hydroxy-2,3,4,5-tetrahydrodipicolinate + NADH + H(+). It carries out the reaction (S)-2,3,4,5-tetrahydrodipicolinate + NADP(+) + H2O = (2S,4S)-4-hydroxy-2,3,4,5-tetrahydrodipicolinate + NADPH + H(+). It participates in amino-acid biosynthesis; L-lysine biosynthesis via DAP pathway; (S)-tetrahydrodipicolinate from L-aspartate: step 4/4. Functionally, catalyzes the conversion of 4-hydroxy-tetrahydrodipicolinate (HTPA) to tetrahydrodipicolinate. This chain is 4-hydroxy-tetrahydrodipicolinate reductase, found in Escherichia coli O127:H6 (strain E2348/69 / EPEC).